Here is a 627-residue protein sequence, read N- to C-terminus: MEEADRILIHSLRQAGTAVPPEVQTLRAFTTELVVEAVVRCLRVINPDVGSGLSHLLPPAMSARFRLAMSLAQACMDLGYPLELGYQNFLYPSEPDLRDLLLFLAERLPSDASEDADQPAGDSAIFLRAIGSQIRDQLALPWVPPLLRTPKVQRLQGSALQQPFHSSRLVLPELNSSGELWEFQASPLLLPAPTQVPQLQGRAASLLEHHASQLCQHVNRDCPGDEDRVRWASRVPSQEDSRAPQQRLHKQLIEHLRQSWGPLGAPTQVRDLGEMLQTWGARAMTGVPKGSRFTHSEKFTFHLEPQVQAAQVADVPATSQRLEQDTRAAQEQELESLREQLASVNHNIEEVEADMKTLGINLVQVETECRQSELSVAEQEQALRLKSRTVELLPDGAANLAKLQLVVESSAQRLIHLASQWEKHRVPLLAEYRHLRRLQDCRELESSRRLAEIQELHHSVRAAAEEARRKEEVYKQLVSELETLPKDVSRLAYTQRILEIVGNIRKQKEEITKILSDTKELQKEINSLSGKLDRTFAVTDELVFKDAKKDDAVRKAYKYLAALHENCSQLIQTIEDTGTIMREVRDLEEQIETEMGKKTLSNLEKICEDYRALRQENAGLLGRVREA.

Positions 1-321 (MEEADRILIH…VADVPATSQR (321 aa)) are sufficient for interaction with COMMD1. The interval 1–447 (MEEADRILIH…LQDCRELESS (447 aa)) is sufficicient and required for interaction with CCDC93. Residue S410 is modified to Phosphoserine. A coiled-coil region spans residues 448–535 (RRLAEIQELH…NSLSGKLDRT (88 aa)).

It belongs to the CCDC22 family. In terms of assembly, component of the commander complex consisting of the CCC subcomplex and the retriever subcomplex. Component of the CCC (COMMD/CCDC22/CCDC93) subcomplex consisting of COMMD1, COMMD2, COMMD3, COMMD4, COMMD5, COMMD6, COMMD7, COMMD8, COMMD9, COMMD10, CCDC22 and CCDC93. Forms a coiled-coil heterodimer with CCDC22; this heterodimer interacts with the guanine nucleotide exchange factor DENND10; the interaction is direct. Interacts with CUL1, CUL2, CUL3, SKP1, BTRC. Interacts with SNX17 and SNX31. Interacts with CPNE1 and CPNE4.

Its subcellular location is the endosome. It localises to the cytoplasm. The protein localises to the cytoskeleton. The protein resides in the microtubule organizing center. It is found in the centrosome. Its function is as follows. Component of the commander complex that is essential for endosomal recycling of transmembrane cargos; the Commander complex is composed of composed of the CCC subcomplex and the retriever subcomplex. Component of the CCC complex, which is involved in the regulation of endosomal recycling of surface proteins, including integrins, signaling receptor and channels. Involved in regulation of NF-kappa-B signaling. Promotes ubiquitination of I-kappa-B-kinase subunit IKBKB and its subsequent proteasomal degradation leading to NF-kappa-B activation; the function may involve association with COMMD8 and a CUL1-dependent E3 ubiquitin ligase complex. May down-regulate NF-kappa-B activity via association with COMMD1 and involving a CUL2-dependent E3 ubiquitin ligase complex. Regulates the cellular localization of COMM domain-containing proteins, such as COMMD1 and COMMD10. Component of the CCC complex, which is involved in the regulation of endosomal recycling of surface proteins, including integrins, signaling receptor and channels. The CCC complex associates with SNX17, retriever and WASH complexes to prevent lysosomal degradation and promote cell surface recycling of numerous cargos such as integrins ITGA5:ITGB1. Plays a role in copper ion homeostasis. Involved in copper-dependent ATP7A trafficking between the trans-Golgi network and vesicles in the cell periphery; the function is proposed to depend on its association within the CCC complex and cooperation with the WASH complex on early endosomes. In Mus musculus (Mouse), this protein is Coiled-coil domain-containing protein 22 (Ccdc22).